Here is a 994-residue protein sequence, read N- to C-terminus: Chloride channel protein 1 (994 aa).

Residues 1–118 lie on the Cytoplasmic side of the membrane; that stretch reads MERSQSQRHG…VLRRKLGEDW (118 aa). The helical transmembrane segment at 119–150 threads the bilayer; the sequence is IFLVLLGLLMALVSWCMDYVSAKSLQAYKWTY. Topologically, residues 151–158 are extracellular; it reads AQMKPSLP. Residues 159–179 form a helical membrane-spanning segment; that stretch reads LQYLAWVTFPLILILFSALFC. The Cytoplasmic portion of the chain corresponds to 180-183; it reads QLIS. The segment at residues 184 to 189 is an intramembrane region (note=Loop between two helices); the sequence is PQAVGS. The Selectivity filter part_1 motif lies at 188 to 192; it reads GSGIP. Ser189 lines the chloride pocket. The segment at residues 190–195 is an intramembrane region (helical); the sequence is GIPEMK. At 196-208 the chain is on the cytoplasmic side; it reads TILRGVVLKEYLT. The helical intramembrane region spans 209-224; sequence LKAFVAKVVALTAGLG. Residues 225–230 constitute an intramembrane region (note=Loop between two helices); sequence SGIPVG. A Selectivity filter part_2 motif is present at residues 230 to 234; sequence GKEGP. An intramembrane region (helical) is located at residues 231–246; it reads KEGPFVHIASICAAVL. The Cytoplasmic segment spans residues 247–268; that stretch reads SKFMSMFSGVYEQPYYYTDILT. 2 consecutive intramembrane regions (helical) follow at residues 269–280 and 281–290; these read VGCAVGVGCCFG and TPLGGVLFSI. Over 291–301 the chain is Cytoplasmic; sequence EVTSTYFAVRN. Residues 302-321 form a helical membrane-spanning segment; sequence YWRGFFAATFSAFVFRVLAV. Residues 322-347 are Extracellular-facing; the sequence is WNKDAVTITALFRTNFRMDFPFDLKE. The helical transmembrane segment at 348–376 threads the bilayer; that stretch reads LPAFAVIGICCGFLGAVFVYLHRQVMLGV. Over 377–390 the chain is Cytoplasmic; it reads RKHKCLSQFLAKHR. Residues 391–408 form a helical membrane-spanning segment; it reads LLYPGIVTFVIASLTFPP. The Extracellular portion of the chain corresponds to 409–414; the sequence is GMGQFM. Residues 415–418 constitute an intramembrane region (note=Loop between two helices); it reads AGEL. The helical intramembrane region spans 419–426; the sequence is MPREAIST. Residues 427–457 are Extracellular-facing; the sequence is LFDNNTWVKHIGDPQSLGQSAVWLHPQVNVI. Positions 458 to 475 form an intramembrane region, helical; it reads IIILLFFVMKFWMSIVAT. The segment at residues 476-482 is an intramembrane region (note=Loop between two helices); sequence TMPIPCG. The Selectivity filter part_3 signature appears at 482 to 486; it reads GGFMP. The segment at residues 483–498 is an intramembrane region (helical); it reads GFMPVFVLGAAFGRLV. Phe484 lines the chloride pocket. Residues 499–521 are Extracellular-facing; the sequence is GEIMAMLFPEGILFDDIIYKILP. Positions 522 to 538 form an intramembrane region, helical; that stretch reads GGYAVIGAAALTGAVSH. The segment at residues 539–540 is an intramembrane region (note=Loop between two helices); that stretch reads TV. The helical intramembrane region spans 541–554; it reads STAVICFELTGQIA. The Extracellular portion of the chain corresponds to 555–557; the sequence is HIL. The segment at residues 558 to 571 is an intramembrane region (helical); sequence PMMVAVILANMVAQ. Residues 572-575 constitute an intramembrane region (note=Loop between two helices); that stretch reads SLQP. The segment at residues 576 to 578 is an intramembrane region (helical); the sequence is SLY. Tyr578 contacts chloride. The Cytoplasmic segment spans residues 579 to 994; the sequence is DSIIQVKKLP…DEEDEDELIL (416 aa). Positions 609–668 constitute a CBS 1 domain; that stretch reads MVRDVKFVSASCTYGELRNLLQATTVKTLPLVDSKDSMILLGSVERSELQSLLQRHLCAE. Residues 710–770 are disordered; it reads EDEDEDLSRK…PEASDSADQR (61 aa). The segment covering 725-739 has biased composition (pro residues); sequence TPAPPPPSPPPPPSQ. One can recognise a CBS 2 domain in the interval 827-882; it reads IDQSPFQLVEQTTLHKTHTLFSLLGLHLAYVTSMGKLRGVLALEELQKAIEGHTKS. Disordered stretches follow at residues 886–954 and 971–994; these read LRPP…ARAE and ELADILHGPSLRSTDEEDEDELIL. Ser892 carries the post-translational modification Phosphoserine. Residues 933–943 show a composition bias toward pro residues; sequence PETPVPPPSPE. A compositionally biased stretch (acidic residues) spans 985–994; it reads DEEDEDELIL.

Belongs to the chloride channel (TC 2.A.49) family. ClC-1/CLCN1 subfamily. In terms of assembly, homodimer. As to expression, predominantly expressed in skeletal muscles.

The protein resides in the cell membrane. It localises to the sarcolemma. Its subcellular location is the T-tubule. The catalysed reaction is chloride(in) = chloride(out). The enzyme catalyses thiocyanate(in) = thiocyanate(out). It catalyses the reaction bromide(in) = bromide(out). It carries out the reaction nitrate(in) = nitrate(out). The catalysed reaction is iodide(out) = iodide(in). Modulated by membrane voltage with depolarization favouring channel opening and hyperpolarization favouring channel closure. Inhibited by acidic pH and ATP binding due to a shift of voltage dependence of common gating to more positive voltages. Inhibited by 9-anthracene-carboxylic. In terms of biological role, voltage-gated chloride channel involved in skeletal muscle excitability. Generates most of the plasma membrane chloride conductance in skeletal muscle fibers, stabilizes the resting membrane potential and contributes to the repolarization phase during action potential firing. Forms a homodimeric channel where each subunit has its own ion conduction pathway. Conducts double-barreled currents controlled by two types of gates, two fast glutamate gates that control each subunit independently and a slow common gate that opens and shuts off both subunits simultaneously. Has a significant open probability at muscle resting potential and is further activated upon membrane depolarization. Permeable to small monovalent anions with ion selectivity for chloride &gt; thiocyanate &gt; bromide &gt; nitrate &gt; iodide. The protein is Chloride channel protein 1 (Clcn1) of Mus musculus (Mouse).